Here is a 591-residue protein sequence, read N- to C-terminus: Probable translation initiation factor IF-2 (591 aa).

Positions 7-223 constitute a tr-type G domain; the sequence is LRTPIVCVMG…LLGLAQRFLE (217 aa). The interval 16–23 is G1; sequence GHVDHGKT. 16 to 23 is a GTP binding site; that stretch reads GHVDHGKT. Positions 41–45 are G2; the sequence is AITQH. Residues 78–81 are G3; the sequence is DTPG. Residues 78-82 and 132-135 each bind GTP; these read DTPGH and NKID. Residues 132 to 135 form a G4 region; the sequence is NKID. The G5 stretch occupies residues 200–202; sequence SAI.

The protein belongs to the TRAFAC class translation factor GTPase superfamily. Classic translation factor GTPase family. IF-2 subfamily.

Its function is as follows. Function in general translation initiation by promoting the binding of the formylmethionine-tRNA to ribosomes. Seems to function along with eIF-2. This Methanococcoides burtonii (strain DSM 6242 / NBRC 107633 / OCM 468 / ACE-M) protein is Probable translation initiation factor IF-2.